A 160-amino-acid polypeptide reads, in one-letter code: Transcription antitermination protein NusB (160 aa).

The protein belongs to the NusB family.

Involved in transcription antitermination. Required for transcription of ribosomal RNA (rRNA) genes. Binds specifically to the boxA antiterminator sequence of the ribosomal RNA (rrn) operons. The polypeptide is Transcription antitermination protein NusB (Rhizobium johnstonii (strain DSM 114642 / LMG 32736 / 3841) (Rhizobium leguminosarum bv. viciae)).